Reading from the N-terminus, the 301-residue chain is Polyamine aminopropyltransferase (301 aa).

The region spanning 4–240 (WHWLLEWQTP…GLWGFVYGGV (237 aa)) is the PABS domain. Position 33 (Gln-33) interacts with S-methyl-5'-thioadenosine. Spermidine contacts are provided by His-64 and Glu-89. Residues Asp-109 and 141–142 (DG) contribute to the S-methyl-5'-thioadenosine site. Residue Asp-159 is the Proton acceptor of the active site.

It belongs to the spermidine/spermine synthase family. In terms of assembly, homotrimer.

It localises to the cytoplasm. It catalyses the reaction S-adenosyl 3-(methylsulfanyl)propylamine + putrescine = S-methyl-5'-thioadenosine + spermidine + H(+). It carries out the reaction S-adenosyl 3-(methylsulfanyl)propylamine + propane-1,3-diamine = norspermidine + S-methyl-5'-thioadenosine + H(+). The enzyme catalyses norspermidine + S-adenosyl 3-(methylsulfanyl)propylamine = norspermine + S-methyl-5'-thioadenosine + H(+). The catalysed reaction is S-adenosyl 3-(methylsulfanyl)propylamine + spermidine = thermospermine + S-methyl-5'-thioadenosine + H(+). The protein operates within amine and polyamine biosynthesis; spermidine biosynthesis; spermidine from putrescine: step 1/1. Its activity is regulated as follows. Competitively inhibited by 5-methylthioadenosine, 5-methylthiotubercidin, S-adenosyl(5)-3-thiopropylamine and S-adenosyl-3-thio-l,8-diaminooctane. In terms of biological role, involved in the biosynthesis of polyamines which are thought to support the growth of thermophilic microorganisms under high-temperature conditions. It seems that long-chain and branched-chain of polyamines effectively stabilize DNA and RNA, respectively. Catalyzes the irreversible transfer of a propylamine group from the amino donor S-adenosylmethioninamine (decarboxy-AdoMet) to various amine acceptors such as putrescine (1,4-diaminobutane), 1,3-diaminopropane, sym-norspermidine and spermidine. The biosynthesis of caldopentamine from norspermine has been also observed, but with a very low activity. The reaction involves a nucleophilic attack on the C-3 methylene of the propylamine moiety adjacent to the positively charged sulfur of decarboxy-AdoMet. S-adenosylmethioninamine is the only amino donor. The sequence is that of Polyamine aminopropyltransferase from Saccharolobus solfataricus (strain ATCC 35092 / DSM 1617 / JCM 11322 / P2) (Sulfolobus solfataricus).